The sequence spans 423 residues: 58 kDa phosphoprotein (423 aa).

Over residues 46-60 (KMGYEKMKSEDSTEE) the composition is skewed to basic and acidic residues. Positions 46-82 (KMGYEKMKSEDSTEEKSDEEEEDEEEEEEEEEDDDPE) are disordered. Residues 61 to 82 (KSDEEEEDEEEEEEEEEDDDPE) are compositionally biased toward acidic residues. 3 TPR repeats span residues 113-146 (ICKLKEEAVDLVENKKYEEALEKYNKIISFGNPS), 147-180 (AMIYTKRASILLNLKRPKACIRDCTEALNLNVDS), and 181-214 (ANAYKIRAKAYRYLGKWEFAHADMEQGQKIDYDE). The tract at residues 260–301 (KKKAEKMYKENNKRENYDSDSSDSSYSEPDFSGDFPGGMPGG) is disordered. Over residues 264 to 276 (EKMYKENNKRENY) the composition is skewed to basic and acidic residues. Positions 292–362 (GDFPGGMPGG…GMPGMPGGMP (71 aa)) are 19 X 3-4 AA approximate repeats. The region spanning 361–423 (MPDLNSPEMK…GGMMGEKPKP (63 aa)) is the STI1 domain.

The protein localises to the cytoplasm. Functionally, may play a role in protein folding or protein-protein interactions. May act as a co-chaperone. This Plasmodium berghei protein is 58 kDa phosphoprotein.